A 398-amino-acid polypeptide reads, in one-letter code: Acetate kinase (398 aa).

Position 9 (Asn-9) interacts with Mg(2+). An ATP-binding site is contributed by Lys-16. A substrate-binding site is contributed by Arg-93. The active-site Proton donor/acceptor is Asp-150. ATP-binding positions include 209-213 (HLGAG), 284-286 (DMR), and 329-333 (GIGEH). Glu-382 lines the Mg(2+) pocket.

Belongs to the acetokinase family. Homodimer. The cofactor is Mg(2+). It depends on Mn(2+) as a cofactor.

The protein resides in the cytoplasm. It carries out the reaction acetate + ATP = acetyl phosphate + ADP. The protein operates within metabolic intermediate biosynthesis; acetyl-CoA biosynthesis; acetyl-CoA from acetate: step 1/2. Its function is as follows. Catalyzes the formation of acetyl phosphate from acetate and ATP. Can also catalyze the reverse reaction. The protein is Acetate kinase of Rhodopseudomonas palustris (strain ATCC BAA-98 / CGA009).